A 1121-amino-acid polypeptide reads, in one-letter code: tRNA (34-2'-O)-methyltransferase regulator WDR6 (1121 aa).

Methionine 1 is subject to N-acetylmethionine. 19 WD repeats span residues 53–97 (IKRV…VVKI), 105–143 (WELW…LYDP), 147–189 (CILQ…VWYP), 200–238 (APDR…IWKV), 247–285 (RVQN…VWSH), 289–327 (ILQA…LWHL), 335–376 (LGVS…LYDV), 381–422 (WEQL…VVPI), 425–470 (PTAA…ISAA), 476–520 (IFVK…LFPS), 559–598 (PVST…FVRD), 604–642 (VLRQ…VWNP), 645–684 (HEKL…LYRA), 739–785 (LTDI…VWGI), 848–893 (RNRH…LFLL), 901–946 (QLLA…FWDL), 970–1012 (GTPS…VFVL), 1036–1073 (EEYS…FWRL), and 1079–1121 (TFMN…NWYD).

This sequence belongs to the WD repeat WDR6 family. In terms of assembly, interacts with FTSJ1; the interaction is direct, and required for 2'-O-methylation of position 34 in substrate tRNAs. Interacts with IRS4. Interacts with STK11/LKB1. In terms of tissue distribution, ubiquitous.

Its subcellular location is the cytoplasm. Together with methyltransferase FTSJ1, methylates the 2'-O-ribose of nucleotides at position 34 of the tRNA anticodon loop of substrate tRNAs. Required for the correct positioning of the substrate tRNA for methylation. Required to suppress amino acid starvation-induced autophagy. Enhances the STK11/LKB1-induced cell growth suppression activity. This is tRNA (34-2'-O)-methyltransferase regulator WDR6 (WDR6) from Homo sapiens (Human).